A 266-amino-acid polypeptide reads, in one-letter code: Vitamin B12-binding protein (266 aa).

The first 22 residues, Met1–Ala22, serve as a signal peptide directing secretion. One can recognise a Fe/B12 periplasmic-binding domain in the interval Arg25–Asp266. Cyanocob(III)alamin contacts are provided by residues Tyr50 and Asp242–Arg246. A disulfide bridge connects residues Cys183 and Cys259.

It belongs to the BtuF family. As to quaternary structure, the complex is composed of two ATP-binding proteins (BtuD), two transmembrane proteins (BtuC) and a solute-binding protein (BtuF).

Its subcellular location is the periplasm. Its function is as follows. Part of the ABC transporter complex BtuCDF involved in vitamin B12 import. Binds vitamin B12 and delivers it to the periplasmic surface of BtuC. In Escherichia coli (strain K12), this protein is Vitamin B12-binding protein (btuF).